We begin with the raw amino-acid sequence, 570 residues long: Endo-1,4-beta-xylanase 5-like (570 aa).

Positions 1–23 (MNSIKNGFFLCMIFLLWCHVDSG) are cleaved as a signal peptide. Residues Asn-197, Asn-261, and Asn-307 are each glycosylated (N-linked (GlcNAc...) asparagine). Residues 202-501 (KGVVISLKQT…TQTGDVIDKL (300 aa)) form the GH10 domain. Catalysis depends on Glu-332, which acts as the Proton donor. The N-linked (GlcNAc...) asparagine glycan is linked to Asn-346. The Nucleophile role is filled by Glu-439. Residues Asn-490, Asn-515, Asn-537, and Asn-545 are each glycosylated (N-linked (GlcNAc...) asparagine).

Belongs to the glycosyl hydrolase 10 (cellulase F) family.

The enzyme catalyses Endohydrolysis of (1-&gt;4)-beta-D-xylosidic linkages in xylans.. The protein operates within glycan degradation; xylan degradation. Binds to and hydrolyzes insoluble and soluble xylan substrates. The protein is Endo-1,4-beta-xylanase 5-like of Arabidopsis thaliana (Mouse-ear cress).